The primary structure comprises 435 residues: Diaminobutyrate--2-oxoglutarate transaminase (435 aa).

Position 266 is an N6-(pyridoxal phosphate)lysine (lysine 266).

It belongs to the class-III pyridoxal-phosphate-dependent aminotransferase family. It depends on pyridoxal 5'-phosphate as a cofactor.

It catalyses the reaction L-2,4-diaminobutanoate + 2-oxoglutarate = L-aspartate 4-semialdehyde + L-glutamate. Its pathway is amine and polyamine biosynthesis; ectoine biosynthesis; L-ectoine from L-aspartate 4-semialdehyde: step 1/3. Functionally, catalyzes reversively the conversion of L-aspartate beta-semialdehyde (ASA) to L-2,4-diaminobutyrate (DABA) by transamination with L-glutamate. This is Diaminobutyrate--2-oxoglutarate transaminase (ectB) from Bordetella bronchiseptica (strain ATCC BAA-588 / NCTC 13252 / RB50) (Alcaligenes bronchisepticus).